Reading from the N-terminus, the 236-residue chain is 7-cyano-7-deazaguanine synthase (236 aa).

An ATP-binding site is contributed by Cys-7 to Ala-17. 4 residues coordinate Zn(2+): Cys-185, Cys-193, Cys-196, and Cys-199.

This sequence belongs to the QueC family. Requires Zn(2+) as cofactor.

It catalyses the reaction 7-carboxy-7-deazaguanine + NH4(+) + ATP = 7-cyano-7-deazaguanine + ADP + phosphate + H2O + H(+). It functions in the pathway purine metabolism; 7-cyano-7-deazaguanine biosynthesis. Catalyzes the ATP-dependent conversion of 7-carboxy-7-deazaguanine (CDG) to 7-cyano-7-deazaguanine (preQ(0)). This chain is 7-cyano-7-deazaguanine synthase, found in Rhizobium etli (strain CIAT 652).